The primary structure comprises 220 residues: Large ribosomal subunit protein uL3 (220 aa).

The segment at Gly-126–Ser-158 is disordered.

It belongs to the universal ribosomal protein uL3 family. Part of the 50S ribosomal subunit. Forms a cluster with proteins L14 and L19.

Its function is as follows. One of the primary rRNA binding proteins, it binds directly near the 3'-end of the 23S rRNA, where it nucleates assembly of the 50S subunit. The chain is Large ribosomal subunit protein uL3 from Macrococcus caseolyticus (strain JCSC5402) (Macrococcoides caseolyticum).